A 570-amino-acid chain; its full sequence is Sulfite reductase [NADPH] hemoprotein beta-component (570 aa).

Positions 434, 440, 479, and 483 each coordinate [4Fe-4S] cluster. Cys-483 serves as a coordination point for siroheme.

It belongs to the nitrite and sulfite reductase 4Fe-4S domain family. In terms of assembly, alpha(8)-beta(8). The alpha component is a flavoprotein, the beta component is a hemoprotein. It depends on siroheme as a cofactor. Requires [4Fe-4S] cluster as cofactor.

The enzyme catalyses hydrogen sulfide + 3 NADP(+) + 3 H2O = sulfite + 3 NADPH + 4 H(+). The protein operates within sulfur metabolism; hydrogen sulfide biosynthesis; hydrogen sulfide from sulfite (NADPH route): step 1/1. Functionally, component of the sulfite reductase complex that catalyzes the 6-electron reduction of sulfite to sulfide. This is one of several activities required for the biosynthesis of L-cysteine from sulfate. This chain is Sulfite reductase [NADPH] hemoprotein beta-component, found in Salmonella arizonae (strain ATCC BAA-731 / CDC346-86 / RSK2980).